A 192-amino-acid polypeptide reads, in one-letter code: Adenylate kinase (192 aa).

10–18 (GVPGVGGTT) serves as a coordination point for ATP.

This sequence belongs to the archaeal adenylate kinase family. Monomer.

It localises to the cytoplasm. The catalysed reaction is AMP + ATP = 2 ADP. The sequence is that of Adenylate kinase from Methanococcus maripaludis (strain C5 / ATCC BAA-1333).